We begin with the raw amino-acid sequence, 725 residues long: IML2-like protein SCY_3392 (725 aa).

Threonine 196 is modified (phosphothreonine). A phosphoserine mark is found at serine 246, serine 377, and serine 380.

It belongs to the IML2 family.

Its subcellular location is the cytoplasm. It is found in the nucleus. Functionally, may be involved in mitochondrial DNA stability. The sequence is that of IML2-like protein SCY_3392 from Saccharomyces cerevisiae (strain YJM789) (Baker's yeast).